Consider the following 425-residue polypeptide: Enolase (425 aa).

Residue Q164 coordinates (2R)-2-phosphoglycerate. The active-site Proton donor is the E208. 3 residues coordinate Mg(2+): D243, E286, and D312. (2R)-2-phosphoglycerate is bound by residues K337, R366, S367, and K388. K337 serves as the catalytic Proton acceptor.

Belongs to the enolase family. The cofactor is Mg(2+).

The protein localises to the cytoplasm. Its subcellular location is the secreted. The protein resides in the cell surface. It carries out the reaction (2R)-2-phosphoglycerate = phosphoenolpyruvate + H2O. It functions in the pathway carbohydrate degradation; glycolysis; pyruvate from D-glyceraldehyde 3-phosphate: step 4/5. Its function is as follows. Catalyzes the reversible conversion of 2-phosphoglycerate (2-PG) into phosphoenolpyruvate (PEP). It is essential for the degradation of carbohydrates via glycolysis. This chain is Enolase, found in Methanococcus aeolicus (strain ATCC BAA-1280 / DSM 17508 / OCM 812 / Nankai-3).